The primary structure comprises 147 residues: Large ribosomal subunit protein uL15 (147 aa).

Residues 1–15 (MTDRVKKTRKLRGHV) show a composition bias toward basic residues. Residues 1-34 (MTDRVKKTRKLRGHVSHGYGRVGKHRKHSGGRGL) are disordered.

This sequence belongs to the universal ribosomal protein uL15 family.

The protein is Large ribosomal subunit protein uL15 (RPL27A) of Encephalitozoon cuniculi (strain GB-M1) (Microsporidian parasite).